A 901-amino-acid chain; its full sequence is Clathrin coat assembly protein AP180 (901 aa).

Positions 14–145 (QYSVTGSAVA…FSYRQMAFDF (132 aa)) constitute an ENTH domain. Disordered stretches follow at residues 285 to 326 (LEGK…DTSP), 397 to 424 (PISDPFAPEPSPPTTTTEPASASASTTT), 497 to 522 (PETSAPVVTPTASTAPPVPATAPSPA), and 573 to 606 (AAAPKPDAAPSIDLFGTDAFSSPPRGASPVPESS). Phosphoserine occurs at positions 296, 300, and 306. Polar residues predominate over residues 302 to 324 (LSKSSPATTVTSPNSTPAKTIDT). An O-linked (GlcNAc) threonine glycan is attached at Thr-310. A Phosphoserine modification is found at Ser-313. Thr-317 is modified (phosphothreonine). Low complexity-rich tracts occupy residues 410–424 (TTTTEPASASASTTT) and 500–511 (SAPVVTPTASTA). Residues 512–522 (PPVPATAPSPA) show a composition bias toward pro residues. Phosphoserine is present on residues Ser-594, Ser-600, Ser-621, Ser-627, and Ser-761. Disordered regions lie at residues 803–845 (SAGV…GMTM) and 857–901 (MMRP…KDFL). Positions 835–845 (GMPPSGTGMTM) are enriched in low complexity. Residue Arg-859 is modified to Asymmetric dimethylarginine; alternate. Arg-859 bears the Omega-N-methylarginine; alternate mark. A compositionally biased stretch (polar residues) spans 870–882 (TQLSPSPTPATQS). Residues 887 to 901 (PAKDPLADLNIKDFL) show a composition bias toward basic and acidic residues.

It belongs to the PICALM/SNAP91 family. Binds AP2A2. Interacts with AP2B1; clathrin competes with SNAP91. Thr-310 can be modified by the addition of N-acetylglucosamine which can be further phosphorylated. There is no evidence for direct Thr-310 phosphorylation. In terms of tissue distribution, brain. Associated with the synapses.

The protein localises to the cell membrane. It is found in the membrane. Its subcellular location is the coated pit. In terms of biological role, adaptins are components of the adaptor complexes which link clathrin to receptors in coated vesicles. Clathrin-associated protein complexes are believed to interact with the cytoplasmic tails of membrane proteins, leading to their selection and concentration. Binding of AP180 to clathrin triskelia induces their assembly into 60-70 nm coats. In Mus musculus (Mouse), this protein is Clathrin coat assembly protein AP180 (Snap91).